The following is a 288-amino-acid chain: Phosphatidylserine decarboxylase proenzyme (288 aa).

Residues Asp-89, His-146, and Ser-252 each act as charge relay system; for autoendoproteolytic cleavage activity in the active site. The active-site Schiff-base intermediate with substrate; via pyruvic acid; for decarboxylase activity is the Ser-252. A Pyruvic acid (Ser); by autocatalysis modification is found at Ser-252.

It belongs to the phosphatidylserine decarboxylase family. PSD-B subfamily. Prokaryotic type I sub-subfamily. In terms of assembly, heterodimer of a large membrane-associated beta subunit and a small pyruvoyl-containing alpha subunit. Pyruvate serves as cofactor. Is synthesized initially as an inactive proenzyme. Formation of the active enzyme involves a self-maturation process in which the active site pyruvoyl group is generated from an internal serine residue via an autocatalytic post-translational modification. Two non-identical subunits are generated from the proenzyme in this reaction, and the pyruvate is formed at the N-terminus of the alpha chain, which is derived from the carboxyl end of the proenzyme. The autoendoproteolytic cleavage occurs by a canonical serine protease mechanism, in which the side chain hydroxyl group of the serine supplies its oxygen atom to form the C-terminus of the beta chain, while the remainder of the serine residue undergoes an oxidative deamination to produce ammonia and the pyruvoyl prosthetic group on the alpha chain. During this reaction, the Ser that is part of the protease active site of the proenzyme becomes the pyruvoyl prosthetic group, which constitutes an essential element of the active site of the mature decarboxylase.

The protein localises to the cell membrane. The catalysed reaction is a 1,2-diacyl-sn-glycero-3-phospho-L-serine + H(+) = a 1,2-diacyl-sn-glycero-3-phosphoethanolamine + CO2. It participates in phospholipid metabolism; phosphatidylethanolamine biosynthesis; phosphatidylethanolamine from CDP-diacylglycerol: step 2/2. In terms of biological role, catalyzes the formation of phosphatidylethanolamine (PtdEtn) from phosphatidylserine (PtdSer). This chain is Phosphatidylserine decarboxylase proenzyme, found in Shewanella frigidimarina (strain NCIMB 400).